Reading from the N-terminus, the 1009-residue chain is 2-oxoglutarate dehydrogenase, mitochondrial (1009 aa).

A mitochondrion-targeting transit peptide spans 1-39 (MLRFIPSSAKARALRRSAVTAYRLNRLTCLSSLQQNRTF). Thiamine diphosphate contacts are provided by arginine 305, aspartate 404, asparagine 437, isoleucine 439, and glutamine 669. Mg(2+)-binding residues include aspartate 404, asparagine 437, and isoleucine 439.

It belongs to the alpha-ketoglutarate dehydrogenase family. The cofactor is thiamine diphosphate. Mg(2+) is required as a cofactor.

Its subcellular location is the mitochondrion matrix. It catalyses the reaction N(6)-[(R)-lipoyl]-L-lysyl-[protein] + 2-oxoglutarate + H(+) = N(6)-[(R)-S(8)-succinyldihydrolipoyl]-L-lysyl-[protein] + CO2. With respect to regulation, catabolite repressed. In terms of biological role, the 2-oxoglutarate dehydrogenase complex catalyzes the overall conversion of 2-oxoglutarate to succinyl-CoA and CO(2). It contains multiple copies of three enzymatic components: 2-oxoglutarate dehydrogenase (E1), dihydrolipoamide succinyltransferase (E2) and lipoamide dehydrogenase (E3). The chain is 2-oxoglutarate dehydrogenase, mitochondrial (kgd1) from Schizosaccharomyces pombe (strain 972 / ATCC 24843) (Fission yeast).